Here is a 282-residue protein sequence, read N- to C-terminus: MTLLDGKALSAKIKEELKEKNQFLKSKGIESCLAVILVGDNPASQTYVKSKAKACEECGIKSLVYHLNENITQNELLALINTLNHDDSVHGILVQLPLPDHICKDLILESIISSKDVDGFHPINVGYLNLGLESGFLPCTPLGVMKLLKAYEIDLEGKDAVIIGASNIVGRPMATMLLNAGATVSVCHIKTKDLSLYTRQADLIIVAAGCVNLLRSDMVKEGVIVVDVGINRLESGKIVGDVDFEEVSKKSSYITPVPGGVGPMTIAMLLENTVKSAKNRLN.

NADP(+) contacts are provided by residues 164 to 166 (GAS), isoleucine 189, and isoleucine 230.

It belongs to the tetrahydrofolate dehydrogenase/cyclohydrolase family. Homodimer.

It carries out the reaction (6R)-5,10-methylene-5,6,7,8-tetrahydrofolate + NADP(+) = (6R)-5,10-methenyltetrahydrofolate + NADPH. It catalyses the reaction (6R)-5,10-methenyltetrahydrofolate + H2O = (6R)-10-formyltetrahydrofolate + H(+). Its pathway is one-carbon metabolism; tetrahydrofolate interconversion. Catalyzes the oxidation of 5,10-methylenetetrahydrofolate to 5,10-methenyltetrahydrofolate and then the hydrolysis of 5,10-methenyltetrahydrofolate to 10-formyltetrahydrofolate. The protein is Bifunctional protein FolD of Campylobacter jejuni subsp. jejuni serotype O:2 (strain ATCC 700819 / NCTC 11168).